Reading from the N-terminus, the 213-residue chain is 3,4-dihydroxy-2-butanone 4-phosphate synthase (213 aa).

Residues 37-38 (RE), D42, 150-154 (RAGHT), and E174 contribute to the D-ribulose 5-phosphate site. E38 is a binding site for Mg(2+). H153 provides a ligand contact to Mg(2+).

It belongs to the DHBP synthase family. As to quaternary structure, homodimer. Mg(2+) is required as a cofactor. The cofactor is Mn(2+).

The catalysed reaction is D-ribulose 5-phosphate = (2S)-2-hydroxy-3-oxobutyl phosphate + formate + H(+). The protein operates within cofactor biosynthesis; riboflavin biosynthesis; 2-hydroxy-3-oxobutyl phosphate from D-ribulose 5-phosphate: step 1/1. In terms of biological role, catalyzes the conversion of D-ribulose 5-phosphate to formate and 3,4-dihydroxy-2-butanone 4-phosphate. In Buchnera aphidicola subsp. Schizaphis graminum (strain Sg), this protein is 3,4-dihydroxy-2-butanone 4-phosphate synthase.